Reading from the N-terminus, the 120-residue chain is cAMP-responsive element-binding protein-like 2 (120 aa).

Residues 1–24 (MDDSKVVGGKVKKPGKRGRKPAKI) form a disordered region. Residues 10–21 (KVKKPGKRGRKP) show a composition bias toward basic residues. A bZIP domain is found at 23–86 (KIDLKAKLER…MAMDQGKIPS (64 aa)). A basic motif region spans residues 29–60 (KLERSRQSARECRARKKLRYQYLEELVSSRER). The leucine-zipper stretch occupies residues 62–69 (ICALREEL). The segment at 93–120 (TGEEQNKSQQNSSRHTKAGKTDANSNSW) is disordered.

The protein belongs to the bZIP family. ATF subfamily. In terms of assembly, interacts with CREB1; regulates CREB1 phosphorylation, stability and transcriptional activity. Post-translationally, phosphorylated by AMPK.

The protein localises to the nucleus. Functionally, probable regulator of CREB1 transcriptional activity which is involved in adipose cells differentiation. May also play a regulatory role in the cell cycle. Identification in a chromosomal region frequently deleted in various cancers suggests that it might act as a tumor suppressor. This is cAMP-responsive element-binding protein-like 2 (CREBL2) from Homo sapiens (Human).